The following is a 2896-amino-acid chain: Protein PRRC2C (2896 aa).

Lysine 27 is modified (N6-acetyllysine). Residues 28 to 212 are disordered; that stretch reads GKSLETQKTT…STAGTSEQND (185 aa). Over residues 88–97 the composition is skewed to basic and acidic residues; the sequence is QEQHEEEKTP. The span at 105 to 119 shows a compositional bias: low complexity; the sequence is KPGVAAPPEVAPAPK. The segment covering 134–144 has biased composition (polar residues); the sequence is QVNSQFQQEFP. Positions 151-160 are enriched in basic and acidic residues; that stretch reads DQEKKEKETN. Phosphoserine occurs at positions 187 and 191. The segment covering 201–211 has biased composition (polar residues); it reads DESTAGTSEQN. Arginine 242 carries the asymmetric dimethylarginine; alternate modification. An Omega-N-methylarginine; alternate modification is found at arginine 242. Residues arginine 255 and arginine 266 each carry the asymmetric dimethylarginine modification. 2 disordered regions span residues 264–729 and 750–788; these read PMRF…QHLA and SGRP…SFEH. Arginine 279 and arginine 281 each carry omega-N-methylarginine. Basic and acidic residues predominate over residues 301–310; it reads ELKELDKFDN. Phosphoserine is present on serine 335. Positions 341–358 are enriched in polar residues; it reads GSNSPKENNSEDQGSKAS. The segment covering 359 to 368 has biased composition (basic and acidic residues); that stretch reads ENNENKKETD. The segment covering 370 to 381 has biased composition (polar residues); sequence VSNTKSSSQIPA. Residue lysine 392 is modified to N6-acetyllysine. 2 positions are modified to phosphoserine: serine 395 and serine 500. Residues 395–405 show a composition bias toward polar residues; sequence SFNQERGTSSH. Residues 465-648 are compositionally biased toward basic and acidic residues; that stretch reads RREEEERRME…EATPVVHETE (184 aa). Low complexity predominate over residues 676–708; the sequence is QRQQEQMKQQQWQQQQQQGVLPQTVPSQPSSST. The segment covering 759–769 has biased composition (pro residues); it reads PIHPGMIPPKP. A phosphoserine mark is found at serine 779, serine 785, and serine 801. The segment at 804-1118 is disordered; it reads RMLWGSDPYP…PVSTVQVEPA (315 aa). 3 stretches are compositionally biased toward basic and acidic residues: residues 825-836, 852-867, and 878-888; these read ATEEPEDVRSEA, NQLE…RESS, and SVEDVRPHHTD. 4 positions are modified to phosphoserine: serine 867, serine 878, serine 920, and serine 929. 3 stretches are compositionally biased toward basic and acidic residues: residues 954–993, 1000–1010, and 1020–1058; these read IDSK…ETRW, NRREEVNDRPV, and VLRD…KKDL. Residues 1020–1046 adopt a coiled-coil conformation; sequence VLRDMKEEREQRKEKEGEKAEKVTEKV. Over residues 1059 to 1081 the composition is skewed to pro residues; it reads PPPPPPPQPPAPIQPQSVPPPIQ. The segment covering 1089 to 1100 has biased composition (polar residues); the sequence is STETATLAQKPS. Residue lysine 1133 forms a Glycyl lysine isopeptide (Lys-Gly) (interchain with G-Cter in SUMO2) linkage. Composition is skewed to basic and acidic residues over residues 1143–1163, 1170–1180, 1214–1230, and 1237–1248; these read SKDL…KKES, YWKEARERDWF, HTRD…RAEH, and RQREESETRSES. Disordered regions lie at residues 1143 to 1647, 1670 to 1785, 1905 to 1991, 2005 to 2164, 2218 to 2238, 2257 to 2290, 2317 to 2341, and 2668 to 2701; these read SKDL…DALS, EDPQ…SAPV, APAS…TAEL, ISKK…VSEM, LPNT…SLTS, WENS…GPST, GAGT…NICK, and DIKP…QSSK. Residues serine 1242, serine 1246, serine 1248, serine 1249, and serine 1263 each carry the phosphoserine modification. Composition is skewed to basic and acidic residues over residues 1261 to 1297, 1305 to 1330, 1381 to 1418, and 1429 to 1446; these read RGSE…ENKK, FKPD…DKAK, EVPK…PARE, and PRQD…REAA. Phosphothreonine is present on residues threonine 1265 and threonine 1267. 2 stretches are compositionally biased toward polar residues: residues 1457–1469 and 1477–1491; these read TNGT…QEPV and GNKT…SSDQ. A compositionally biased stretch (basic and acidic residues) spans 1505 to 1517; it reads FNERRERDEKKNA. Serine 1544 carries the phosphoserine modification. Composition is skewed to basic and acidic residues over residues 1620–1634 and 1692–1704; these read NSKD…DPKP and RLQD…KEEQ. The stretch at 1682-1717 forms a coiled coil; that stretch reads TEVVSKKQQKRLQDEERRKKEEQVIQVWNKKNANEK. Residues 1742-1785 show a composition bias toward low complexity; that stretch reads SSASVPPLASAPLPPSTSASVPASTSAPLPATLTPVPASTSAPV. Residues 1913 to 1929 are compositionally biased toward pro residues; sequence APAPTPVSAPNPAPPAP. Positions 1943–1952 are enriched in low complexity; the sequence is PLQTTSQSSK. Threonine 1965 bears the Phosphothreonine mark. A compositionally biased stretch (polar residues) spans 1976 to 1986; sequence KSIQTPQSHGT. Serine 1983 and serine 2013 each carry phosphoserine. A compositionally biased stretch (polar residues) spans 2019–2035; that stretch reads SVSAWNKPLTSFGSAPS. The segment covering 2075 to 2088 has biased composition (basic and acidic residues); it reads KSADKIPEPKEQRQ. Phosphoserine is present on serine 2105. Over residues 2108 to 2132 the composition is skewed to basic and acidic residues; the sequence is ENKEHKPGPIGKERSLKNRKVKDAQ. Phosphoserine is present on serine 2143. A compositionally biased stretch (basic and acidic residues) spans 2257-2267; sequence WENSPNVREKG. The residue at position 2260 (serine 2260) is a Phosphoserine. Over residues 2269–2290 the composition is skewed to polar residues; that stretch reads PVTSTAPPIATGVSSSASGPST. Residues 2320 to 2334 show a composition bias toward low complexity; sequence TYTTSSLSTKSTTTS. Residues threonine 2673 and threonine 2682 each carry the phosphothreonine modification. Residues 2679–2701 are compositionally biased toward polar residues; sequence RSTTPTSSPFRATSTSPNSQSSK. A phosphoserine mark is found at serine 2686 and serine 2694. Arginine 2814 is modified (omega-N-methylarginine). At arginine 2823 the chain carries Asymmetric dimethylarginine; alternate. Arginine 2823 carries the post-translational modification Omega-N-methylarginine; alternate. The segment covering 2824-2833 has biased composition (polar residues); sequence FFSEQQQSKQ. Positions 2824-2896 are disordered; the sequence is FFSEQQQSKQ…QAIKTEETKS (73 aa).

Overexpressed in bladder cancer.

It is found in the cytoplasm. Its subcellular location is the stress granule. Functionally, required for efficient formation of stress granules. In Homo sapiens (Human), this protein is Protein PRRC2C.